The following is a 688-amino-acid chain: Zinc finger and BTB domain-containing protein 48 (688 aa).

Residues 26–89 (CDATLDVGGL…FYTGHLALTS (64 aa)) enclose the BTB domain. The interval 119 to 140 (SVGQAAGGQSGLGPPASQNVNS) is disordered. Lys143 is covalently cross-linked (Glycyl lysine isopeptide (Lys-Gly) (interchain with G-Cter in SUMO2)). The segment at 161–192 (PRDQEPRGSHSPQRPQLHSPAQSEGPSSLCGK) is disordered. Residues Ser169, Ser171, and Ser179 each carry the phosphoserine modification. The span at 170–186 (HSPQRPQLHSPAQSEGP) shows a compositional bias: polar residues. Lys263 participates in a covalent cross-link: Glycyl lysine isopeptide (Lys-Gly) (interchain with G-Cter in SUMO2). A C2H2-type 1 zinc finger spans residues 291–313 (VECPTCHKKFLSKYYLKVHNRKH). The Zn(2+) site is built by Cys293, Cys296, His309, His313, Cys321, Cys324, His337, Cys342, Cys352, Cys355, His368, His372, Cys380, Cys383, His396, and His401. The CCHC-type zinc-finger motif lies at 319–344 (FECPKCGKCYFRKENLLEHEARNCMN). C2H2-type zinc fingers lie at residues 350–372 (FTCSVCQETFRRRMELRVHMVSH), 378–401 (YKCSSCSQQFMQKKDLQSHMIKLH), 407–430 (HACPTCAKCFLSRTELQLHEAFKH), 436–459 (FVCEECGHRASSRNGLQMHIKAKH), 465–487 (HVCEFCSHAFTQKANLNMHLRTH), 493–515 (FQCHLCGKTFRTQASLDKHNRTH), 521–544 (FSCEFCEQRFTEKGPLLRHVASRH), 550–572 (HFCQICGKTFKAVEQLRVHVRRH), and 578–600 (FECTECGYKFTRQAHLRRHMEIH). Positions 552, 555, 568, 580, 583, 596, and 600 each coordinate Zn(2+).

This sequence belongs to the krueppel C2H2-type zinc-finger protein family. In terms of assembly, interacts with EP300. In terms of tissue distribution, detected in adrenal gland and neuroblastoma.

The protein localises to the nucleus. Its subcellular location is the chromosome. It is found in the telomere. In terms of biological role, plays a critical role in transcriptional regulation and chromatin remodeling. Acts as a regulator of telomere length. Directly binds the telomeric double-stranded 5'-TTAGGG-3' repeat. Preferentially binds to telomeres that have a low concentration of shelterin complex and acts as a regulator of telomere length by initiating telomere trimming, a process that prevents the accumulation of aberrantly long telomeres. Also acts as a transcription regulator that binds to promoter regions. Regulates expression of a small subset of genes, including MTFP1. Acts as a negative regulator of cell proliferation by specifically activating expression of ARF, a tumor suppressor isoform of CDKN2A. Acts as a transcription regulator of CIITA, the major factor regulating MHC class II gene expression. In addition, regulates cellular m6A/m6Am methylation on RNA by facilitating the recruitment of the RNA demethylase, FTO, to target mRNAs. This is Zinc finger and BTB domain-containing protein 48 from Homo sapiens (Human).